An 87-amino-acid polypeptide reads, in one-letter code: Spermatid-specific protein S1 (87 aa).

The interval 1-36 (TKSRYRNRRSRPRRRYGRRMRKTRCRRKGRRISRRP) is disordered.

It is found in the nucleus. Its subcellular location is the chromosome. Functionally, involved in nuclear basic protein transition: histones are replaced by spermatid specific proteins which are themselves replaced by protamines in late spermatids. This Scyliorhinus canicula (Small-spotted catshark) protein is Spermatid-specific protein S1.